The following is a 236-amino-acid chain: Transmembrane protein 65 (236 aa).

The N-terminal 57 residues, 1–57 (MSRLLPLLRSRTARSLRPGPAAAAAPRPPSWCCCGRGLLALAAPGGPRALGTHPKKE), are a transit peptide targeting the mitochondrion. The Cytoplasmic portion of the chain corresponds to 58 to 106 (PIEALNTAQGARDFIYSLHSSERSCLLKELHRFESIAIAQEKLEAQPPT). Residues 107–127 (PGQLRYVFIHNAIPFIGFGFL) form a helical membrane-spanning segment. The Extracellular segment spans residues 128 to 138 (DNAIMIVAGTH). Residues 139 to 161 (IELSIGIILGISTMAAAALGNLV) form a helical membrane-spanning segment. Over 162–205 (SDLAGLGLAGYVEALASRLGLSIPDLSPKQVDMWQTRVSSHLGK) the chain is Cytoplasmic. The chain crosses the membrane as a helical span at residues 206–226 (AVGVTIGCILGMFPLIFFGGG). At 227 to 236 (EDDEKLEKKN) the chain is on the extracellular side.

Monomer. Homodimer. Interacts with GJA1. Interacts weakly with DSP. Interacts with SCN1B.

The protein resides in the cell membrane. Its subcellular location is the mitochondrion inner membrane. Its function is as follows. Essential for maintaining proper cardiac intercalated disk (ICD) structure and function as well as cardiac conduction velocity in the heart. Its association with SCN1B is required for stabilizing the perinexus in the ICD and for localization of GJA1 and SCN5A to the ICD. May regulate the function of the gap junction protein GJA1 and may contribute to the stability and proper localization of GJA1 to cardiac intercalated disk thereby regulating gap junction communication. Regulates mitochondrial respiration and mitochondrial DNA copy number maintenance. The chain is Transmembrane protein 65 (TMEM65) from Bos taurus (Bovine).